Reading from the N-terminus, the 179-residue chain is Cytochrome b6-f complex iron-sulfur subunit (179 aa).

The helical transmembrane segment at 21 to 43 (LLTFGTVTGVALGALYPVVNYFI) threads the bilayer. A Rieske domain is found at 61–162 (GNDVSVTKFL…TNVSDDKIVL (102 aa)). [2Fe-2S] cluster contacts are provided by cysteine 108, histidine 110, cysteine 126, and histidine 129. Cysteine 113 and cysteine 128 are joined by a disulfide.

Belongs to the Rieske iron-sulfur protein family. As to quaternary structure, the 4 large subunits of the cytochrome b6-f complex are cytochrome b6, subunit IV (17 kDa polypeptide, PetD), cytochrome f and the Rieske protein, while the 4 small subunits are PetG, PetL, PetM and PetN. The complex functions as a dimer. [2Fe-2S] cluster serves as cofactor.

Its subcellular location is the cellular thylakoid membrane. It catalyses the reaction 2 oxidized [plastocyanin] + a plastoquinol + 2 H(+)(in) = 2 reduced [plastocyanin] + a plastoquinone + 4 H(+)(out). Its function is as follows. Component of the cytochrome b6-f complex, which mediates electron transfer between photosystem II (PSII) and photosystem I (PSI), cyclic electron flow around PSI, and state transitions. The polypeptide is Cytochrome b6-f complex iron-sulfur subunit (Nostoc punctiforme (strain ATCC 29133 / PCC 73102)).